Here is a 121-residue protein sequence, read N- to C-terminus: UPF0231 protein ESA_03214 (121 aa).

Belongs to the UPF0231 family.

This is UPF0231 protein ESA_03214 from Cronobacter sakazakii (strain ATCC BAA-894) (Enterobacter sakazakii).